The chain runs to 429 residues: Adenylosuccinate synthetase (429 aa).

GTP-binding positions include 12-18 and 40-42; these read GDEGKGK and GHT. Aspartate 13 acts as the Proton acceptor in catalysis. Mg(2+) contacts are provided by aspartate 13 and glycine 40. Residues 13–16, 38–41, threonine 129, arginine 143, glutamine 223, threonine 238, and arginine 302 contribute to the IMP site; these read DEGK and NAGH. The Proton donor role is filled by histidine 41. A substrate-binding site is contributed by 298-304; that stretch reads TVTGRPR. GTP-binding positions include arginine 304, 330 to 332, and 412 to 414; these read KLD and STS.

Belongs to the adenylosuccinate synthetase family. As to quaternary structure, homodimer. Mg(2+) is required as a cofactor.

It localises to the cytoplasm. The catalysed reaction is IMP + L-aspartate + GTP = N(6)-(1,2-dicarboxyethyl)-AMP + GDP + phosphate + 2 H(+). The protein operates within purine metabolism; AMP biosynthesis via de novo pathway; AMP from IMP: step 1/2. Functionally, plays an important role in the de novo pathway of purine nucleotide biosynthesis. Catalyzes the first committed step in the biosynthesis of AMP from IMP. This is Adenylosuccinate synthetase from Paramagnetospirillum magneticum (strain ATCC 700264 / AMB-1) (Magnetospirillum magneticum).